An 874-amino-acid polypeptide reads, in one-letter code: uncharacterized protein (874 aa).

This is an uncharacterized protein from Ostreid herpesvirus 1 (isolate France) (OsHV-1).